The chain runs to 305 residues: UDP-3-O-acyl-N-acetylglucosamine deacetylase (305 aa).

Positions 79, 238, and 242 each coordinate Zn(2+). The Proton donor role is filled by His265.

The protein belongs to the LpxC family. It depends on Zn(2+) as a cofactor.

It carries out the reaction a UDP-3-O-[(3R)-3-hydroxyacyl]-N-acetyl-alpha-D-glucosamine + H2O = a UDP-3-O-[(3R)-3-hydroxyacyl]-alpha-D-glucosamine + acetate. Its pathway is glycolipid biosynthesis; lipid IV(A) biosynthesis; lipid IV(A) from (3R)-3-hydroxytetradecanoyl-[acyl-carrier-protein] and UDP-N-acetyl-alpha-D-glucosamine: step 2/6. Catalyzes the hydrolysis of UDP-3-O-myristoyl-N-acetylglucosamine to form UDP-3-O-myristoylglucosamine and acetate, the committed step in lipid A biosynthesis. The sequence is that of UDP-3-O-acyl-N-acetylglucosamine deacetylase from Proteus mirabilis (strain HI4320).